A 278-amino-acid chain; its full sequence is uncharacterized protein (278 aa).

A run of 10 helical transmembrane segments spans residues 1–21 (MLEI…GIAY), 30–50 (AFTA…PLAL), 56–76 (VVID…SFYI), 92–112 (IALP…TVIY), 116–136 (LSLN…IIYG), 146–166 (LFYA…LDFL), 170–190 (LPVS…LSFT), 209–229 (GIFL…SSSW), 230–250 (NVVQ…AIFL), and 258–278 (LVAG…PPLQ). EamA domains lie at 12–136 (ICWA…IIYG) and 154–274 (FSWA…LLLL).

The protein belongs to the EamA transporter family.

The protein resides in the cell membrane. This is an uncharacterized protein from Archaeoglobus fulgidus (strain ATCC 49558 / DSM 4304 / JCM 9628 / NBRC 100126 / VC-16).